Reading from the N-terminus, the 289-residue chain is UPF0276 protein BPP1075 (289 aa).

This sequence belongs to the UPF0276 family.

This Bordetella parapertussis (strain 12822 / ATCC BAA-587 / NCTC 13253) protein is UPF0276 protein BPP1075.